The chain runs to 264 residues: Non-homologous end-joining factor xrc4 (264 aa).

Positions 173–186 (RNNEDNEDNHHINY) are enriched in basic and acidic residues. The segment at 173–264 (RNNEDNEDNH…SHESSETVSE (92 aa)) is disordered. A compositionally biased stretch (polar residues) spans 200–209 (QEGVNSSAVS). Over residues 248 to 264 (DDSHRRSSHESSETVSE) the composition is skewed to basic and acidic residues.

Belongs to the XRCC4-XLF family. XRCC4 subfamily. As to quaternary structure, interacts with lig4; the interaction is direct.

The protein localises to the nucleus. Involved in double-strand break repair via non-homologous end joining (NHEJ); the repair of a double-strand break in DNA in which the two broken ends are rejoined with little or no sequence complementarity. This is Non-homologous end-joining factor xrc4 from Schizosaccharomyces pombe (strain 972 / ATCC 24843) (Fission yeast).